A 384-amino-acid polypeptide reads, in one-letter code: Cell adhesion molecule CEACAM18 (384 aa).

A signal peptide spans 1-30; that stretch reads MDLSRPRWSLWRRVFLMASLLACGICQASG. N108, N112, N121, N162, and N270 each carry an N-linked (GlcNAc...) asparagine glycan. The region spanning 227–314 is the Ig-like C2-type domain; the sequence is PDYVLLRSNP…LIMYMDVRIQ (88 aa). C255 and C296 form a disulfide bridge. A disordered region spans residues 358-384; sequence QPLLNQDKSGSMSVHPRPEDKTRRASR. The segment covering 359 to 369 has biased composition (polar residues); it reads PLLNQDKSGSM. The span at 373–384 shows a compositional bias: basic and acidic residues; the sequence is PRPEDKTRRASR.

Belongs to the immunoglobulin superfamily. CEA family.

This chain is Cell adhesion molecule CEACAM18, found in Homo sapiens (Human).